The following is a 201-amino-acid chain: tRNA (guanine-N(7)-)-methyltransferase (201 aa).

Residues E34, E59, D86, and D107 each coordinate S-adenosyl-L-methionine. The active site involves D107. Residues K111, D143, and 181-184 each bind substrate; that span reads TDYE.

This sequence belongs to the class I-like SAM-binding methyltransferase superfamily. TrmB family.

The enzyme catalyses guanosine(46) in tRNA + S-adenosyl-L-methionine = N(7)-methylguanosine(46) in tRNA + S-adenosyl-L-homocysteine. Its pathway is tRNA modification; N(7)-methylguanine-tRNA biosynthesis. Its function is as follows. Catalyzes the formation of N(7)-methylguanine at position 46 (m7G46) in tRNA. The protein is tRNA (guanine-N(7)-)-methyltransferase of Mycoplasma mobile (strain ATCC 43663 / 163K / NCTC 11711) (Mesomycoplasma mobile).